The following is a 133-amino-acid chain: Holo-[acyl-carrier-protein] synthase (133 aa).

Asp-8 and Glu-56 together coordinate Mg(2+).

The protein belongs to the P-Pant transferase superfamily. AcpS family. Mg(2+) is required as a cofactor.

It localises to the cytoplasm. It catalyses the reaction apo-[ACP] + CoA = holo-[ACP] + adenosine 3',5'-bisphosphate + H(+). Its function is as follows. Transfers the 4'-phosphopantetheine moiety from coenzyme A to a Ser of acyl-carrier-protein. In Clostridium perfringens (strain SM101 / Type A), this protein is Holo-[acyl-carrier-protein] synthase.